The primary structure comprises 672 residues: MTDKERAKLAKAYGKLAQKIQKSYPDINVVYGRDAKNKLHALYQDPETGNIFSLEKRKQLPADYPLFELDSDEPISFAPKIIPLTAFDGNNNEVIVQYDQVNNTFYDQDGNVLDVSGYRDGENIPLVDYLNYGGSTASADTTTSEPLSGEGYPDIDAGLPVVDPDATPEQQADQLFGLDPLPQAPDEYQDTTAPPAYDQTFDQATYDQQAYDQNYDPNAYYDQQAYDQSFDQQAYDQAYDANAYNTQNYDQAHDPNAYYDSQAYSDPDQASAVAPIEVAPLQPEPVAPVVEPTAVPIVESAPIVEVTPTVEPTPTPVVETAPVVEAPKVVEPTPTPVVEATPAPKVEPKVVEQPQPTPVTVEVDSPKVEIPKVVTAKVALQVAQPTPVPAVPKVAPQPTPAPVVVQPTAVVQPVVKAEPKVVTPTPAPQVVVTPQVATPKVTPKVVQTTPAVPPVVVQPEVVVQPIIRPTQPEPEWKPSPASVVEPQPCQSACVNNESGAITIHTTNRSLLLEKLASLGHLHDASTRTPLPHERYQLAPPSEYVATKYNEPLFNLPAIRNSWARFTRPTVESTPIASRFTGVTPMAVNYRNPASLNFDSLNSFGAYRSPSSFYPLRRPLELSSLRRNRSSFFNTHRFDLGSNYTSFTPRYRSPLRGGLSQRFPLRSSWSKEF.

25 consecutive repeat copies span residues 98–100 (YDQ), 106–108 (YDQ), 160–162 (PVV), 197–199 (YDQ), 206–208 (YDQ), 211–213 (YDQ), 221–223 (YDQ), 226–228 (YDQ), 235–237 (YDQ), 249–251 (YDQ), 288–290 (PVV), 310–319 (VEPTPTPVVE), 312–315 (PTPT), 316–318 (PVV), 322–324 (PVV), 330–339 (VEPTPTPVVE), 332–335 (PTPT), 336–338 (PVV), 354–358 (PQPTP), 385–389 (PTPVP), 396–400 (PQPTP), 402–404 (PVV), 413–415 (PVV), 424–428 (PTPAP), and 454–456 (PVV). The 9 X 3 AA repeats OF Y-D-Q stretch occupies residues 98–251 (YDQVNNTFYD…NAYNTQNYDQ (154 aa)). Residues 160-456 (PVVDPDATPE…QTTPAVPPVV (297 aa)) form an 8 X 3 AA repeats of P-V-V region. Residues 177–197 (GLDPLPQAPDEYQDTTAPPAY) form a disordered region. The segment at 310–339 (VEPTPTPVVETAPVVEAPKVVEPTPTPVVE) is 2 X 10 AA repeats of V-E-P-T-P-T-P-V-V-E. The tract at residues 312 to 428 (PTPTPVVETA…PKVVTPTPAP (117 aa)) is 6 X 5 AA repeats of P-X-P-X-P.

It is found in the cell projection. The protein resides in the attachment organelle membrane. In terms of biological role, component of the cytoskeleton-like structure which stabilizes the shape of the wall-less mycoplasma. This cytoskeleton-like network of accessory proteins containing HMW proteins 1 to 5 allows the proper anchoring of cytadhesin proteins in the mycoplasmal membrane at the attachment organelle. Essential for successful surface parasitism. The sequence is that of Cytadherence high molecular weight protein 3 (hmw3) from Mycoplasma pneumoniae (strain ATCC 29342 / M129 / Subtype 1) (Mycoplasmoides pneumoniae).